Reading from the N-terminus, the 207-residue chain is Large ribosomal subunit protein uL4 (207 aa).

A disordered region spans residues 49-78 (HAVKNRSAVSGGGRKPWRQKGTGRARQGSI).

Belongs to the universal ribosomal protein uL4 family. Part of the 50S ribosomal subunit.

Its function is as follows. One of the primary rRNA binding proteins, this protein initially binds near the 5'-end of the 23S rRNA. It is important during the early stages of 50S assembly. It makes multiple contacts with different domains of the 23S rRNA in the assembled 50S subunit and ribosome. In terms of biological role, forms part of the polypeptide exit tunnel. This Streptococcus pyogenes serotype M1 protein is Large ribosomal subunit protein uL4 (rplD).